Here is a 229-residue protein sequence, read N- to C-terminus: Potassium/proton antiporter CemA (229 aa).

3 helical membrane-spanning segments follow: residues 7–27 (FLPLLYLTSIVFLPWWISLSF), 106–126 (MILHLSTNITSFIILSGYSIL), and 189–209 (IISGLVSTFPVILDTIFKYWI).

It belongs to the CemA family.

It is found in the plastid. The protein localises to the chloroplast inner membrane. The catalysed reaction is K(+)(in) + H(+)(out) = K(+)(out) + H(+)(in). Functionally, contributes to K(+)/H(+) antiport activity by supporting proton efflux to control proton extrusion and homeostasis in chloroplasts in a light-dependent manner to modulate photosynthesis. Prevents excessive induction of non-photochemical quenching (NPQ) under continuous-light conditions. Indirectly promotes efficient inorganic carbon uptake into chloroplasts. This chain is Potassium/proton antiporter CemA, found in Eucalyptus globulus subsp. globulus (Tasmanian blue gum).